A 207-amino-acid polypeptide reads, in one-letter code: Small ribosomal subunit protein uS4 (207 aa).

Positions 26 to 53 are disordered; sequence KPFDVKTKKHAKAPGQHGQARGKQSEYS. Residues 97 to 159 form the S4 RNA-binding domain; sequence SRLDNVVYRM…AKQQLRIKNA (63 aa).

This sequence belongs to the universal ribosomal protein uS4 family. Part of the 30S ribosomal subunit. Contacts protein S5. The interaction surface between S4 and S5 is involved in control of translational fidelity.

In terms of biological role, one of the primary rRNA binding proteins, it binds directly to 16S rRNA where it nucleates assembly of the body of the 30S subunit. Its function is as follows. With S5 and S12 plays an important role in translational accuracy. The sequence is that of Small ribosomal subunit protein uS4 from Acinetobacter baylyi (strain ATCC 33305 / BD413 / ADP1).